Consider the following 403-residue polypeptide: Phosphopentomutase (403 aa).

6 residues coordinate Mn(2+): Asp13, Asp298, His303, Asp339, His340, and His351.

This sequence belongs to the phosphopentomutase family. It depends on Mn(2+) as a cofactor.

Its subcellular location is the cytoplasm. It carries out the reaction 2-deoxy-alpha-D-ribose 1-phosphate = 2-deoxy-D-ribose 5-phosphate. It catalyses the reaction alpha-D-ribose 1-phosphate = D-ribose 5-phosphate. It participates in carbohydrate degradation; 2-deoxy-D-ribose 1-phosphate degradation; D-glyceraldehyde 3-phosphate and acetaldehyde from 2-deoxy-alpha-D-ribose 1-phosphate: step 1/2. In terms of biological role, isomerase that catalyzes the conversion of deoxy-ribose 1-phosphate (dRib-1-P) and ribose 1-phosphate (Rib-1-P) to deoxy-ribose 5-phosphate (dRib-5-P) and ribose 5-phosphate (Rib-5-P), respectively. This Streptococcus pyogenes serotype M18 (strain MGAS8232) protein is Phosphopentomutase.